The primary structure comprises 1504 residues: DNA-directed RNA polymerase subunit beta' (1504 aa).

Zn(2+) contacts are provided by cysteine 60, cysteine 62, cysteine 75, and cysteine 78. Residues 265 to 294 (RKQRDLEDAEQLTGAERERKEYEASQERER) form a disordered region. Positions 279 to 294 (AERERKEYEASQERER) are enriched in basic and acidic residues. The Mg(2+) site is built by aspartate 626, aspartate 628, and aspartate 630. The Zn(2+) site is built by cysteine 1002, cysteine 1075, cysteine 1082, and cysteine 1085. Residues 1468 to 1504 (RALIGGDGDDGERNNGDFDDQVGEDVVIPPDDDDQEA) are disordered.

This sequence belongs to the RNA polymerase beta' chain family. In terms of assembly, the RNAP catalytic core consists of 2 alpha, 1 beta, 1 beta' and 1 omega subunit. When a sigma factor is associated with the core the holoenzyme is formed, which can initiate transcription. Mg(2+) is required as a cofactor. It depends on Zn(2+) as a cofactor.

The catalysed reaction is RNA(n) + a ribonucleoside 5'-triphosphate = RNA(n+1) + diphosphate. DNA-dependent RNA polymerase catalyzes the transcription of DNA into RNA using the four ribonucleoside triphosphates as substrates. The protein is DNA-directed RNA polymerase subunit beta' of Roseiflexus sp. (strain RS-1).